An 817-amino-acid polypeptide reads, in one-letter code: Anaphase-promoting complex subunit 4 (817 aa).

The residue at position 469 (Tyr-469) is a Phosphotyrosine. Ser-757 and Ser-758 each carry phosphoserine. Lys-772 participates in a covalent cross-link: Glycyl lysine isopeptide (Lys-Gly) (interchain with G-Cter in SUMO2). Ser-777 and Ser-779 each carry phosphoserine. A Glycyl lysine isopeptide (Lys-Gly) (interchain with G-Cter in SUMO2) cross-link involves residue Lys-798.

The protein belongs to the APC4 family. In terms of assembly, the mammalian APC/C is composed at least of 14 distinct subunits ANAPC1, ANAPC2, CDC27/APC3, ANAPC4, ANAPC5, CDC16/APC6, ANAPC7, CDC23/APC8, ANAPC10, ANAPC11, CDC26/APC12, ANAPC13, ANAPC15 and ANAPC16 that assemble into a complex of at least 19 chains with a combined molecular mass of around 1.2 MDa; APC/C interacts with FZR1 and FBXO5. In the context of the APC/C complex, directly interacts with UBE2S.

It localises to the nucleus. Its pathway is protein modification; protein ubiquitination. In terms of biological role, component of the anaphase promoting complex/cyclosome (APC/C), a cell cycle-regulated E3 ubiquitin ligase that controls progression through mitosis and the G1 phase of the cell cycle. The APC/C complex acts by mediating ubiquitination and subsequent degradation of target proteins: it mainly mediates the formation of 'Lys-11'-linked polyubiquitin chains and, to a lower extent, the formation of 'Lys-48'- and 'Lys-63'-linked polyubiquitin chains. The APC/C complex catalyzes assembly of branched 'Lys-11'-/'Lys-48'-linked branched ubiquitin chains on target proteins. This is Anaphase-promoting complex subunit 4 (ANAPC4) from Pongo abelii (Sumatran orangutan).